We begin with the raw amino-acid sequence, 396 residues long: MAEVDTFLFTSESVNEGHPDKLCDQISDAVLDACLAEDPESKVACETCTKTNMVMVFGEITTKANVDYEKIVRDTCRGIGFVSNDVGLDAEHCKVLVNIEQQSPDIAQGVHGHFTKRPEEIGAGDQGHMFGYATDETPELMPLSHVLATKLGARLTEVRKNGACAWLRPDGKTQVTVEYQNDNGAMVPLRVHTVLISTQHDETVTNDEIAADLKEHVIKPVIPEQYLDEKTIFHLNPSGRFVIGGPHGDAGLTGRKIIIDTYGGWGAHGGGAFSGKDPTKVDRSGAYIARQAAKSIVANGLARRCIVQVSYAIGVPEPLSVFVDTYGTGKIPDREILRIVTENFDFRPGMIIINLDLMRGGNGRYLKTAAYGHFGREDPDFTWEVVKPLKWEEPSA.

Mg(2+) is bound at residue glutamate 12. Histidine 18 is an ATP binding site. Residue glutamate 46 coordinates K(+). 2 residues coordinate L-methionine: glutamate 59 and glutamine 102. ATP-binding positions include 170–172 (DGK), 238–241 (SGRF), aspartate 249, 255–256 (RK), alanine 272, lysine 276, and lysine 280. Position 249 (aspartate 249) interacts with L-methionine. Lysine 280 provides a ligand contact to L-methionine.

It belongs to the AdoMet synthase family. In terms of assembly, homotetramer. Requires Mn(2+) as cofactor. It depends on Mg(2+) as a cofactor. Co(2+) is required as a cofactor. K(+) serves as cofactor.

It localises to the cytoplasm. It carries out the reaction L-methionine + ATP + H2O = S-adenosyl-L-methionine + phosphate + diphosphate. Its pathway is amino-acid biosynthesis; S-adenosyl-L-methionine biosynthesis; S-adenosyl-L-methionine from L-methionine: step 1/1. In terms of biological role, catalyzes the formation of S-adenosylmethionine from methionine and ATP. The reaction comprises two steps that are both catalyzed by the same enzyme: formation of S-adenosylmethionine (AdoMet) and triphosphate, and subsequent hydrolysis of the triphosphate. This chain is S-adenosylmethionine synthase 3 (METK3), found in Oryza sativa subsp. japonica (Rice).